We begin with the raw amino-acid sequence, 80 residues long: Mitotic-spindle organizing protein 1 (80 aa).

The protein belongs to the MOZART1 family. In terms of assembly, part of the gamma-tubulin complex.

Its subcellular location is the cytoplasm. It localises to the cytoskeleton. It is found in the microtubule organizing center. The protein localises to the spindle pole body. Its function is as follows. Required for gamma-tubulin complex recruitment to the microtubule organizing center (MTOC). The protein is Mitotic-spindle organizing protein 1 of Pyricularia oryzae (strain 70-15 / ATCC MYA-4617 / FGSC 8958) (Rice blast fungus).